Consider the following 554-residue polypeptide: Phenylalanine--tRNA ligase beta subunit (554 aa).

Residues 276 to 351 enclose the B5 domain; sequence LTPKSRIISV…INYGYEKFDG (76 aa). Asp-329, Asp-335, Glu-338, and Glu-339 together coordinate Mg(2+).

This sequence belongs to the phenylalanyl-tRNA synthetase beta subunit family. Type 2 subfamily. As to quaternary structure, tetramer of two alpha and two beta subunits. It depends on Mg(2+) as a cofactor.

The protein localises to the cytoplasm. The catalysed reaction is tRNA(Phe) + L-phenylalanine + ATP = L-phenylalanyl-tRNA(Phe) + AMP + diphosphate + H(+). The protein is Phenylalanine--tRNA ligase beta subunit of Methanococcus maripaludis (strain DSM 14266 / JCM 13030 / NBRC 101832 / S2 / LL).